The following is a 573-amino-acid chain: Threonine--tRNA ligase (573 aa).

Residues 174–474 (DHRRINKILE…LLEQTKGALD (301 aa)) form a catalytic region. Residues cysteine 268, histidine 319, and histidine 451 each coordinate Zn(2+).

Belongs to the class-II aminoacyl-tRNA synthetase family. As to quaternary structure, homodimer. Requires Zn(2+) as cofactor.

The protein localises to the cytoplasm. The enzyme catalyses tRNA(Thr) + L-threonine + ATP = L-threonyl-tRNA(Thr) + AMP + diphosphate + H(+). Its function is as follows. Catalyzes the attachment of threonine to tRNA(Thr) in a two-step reaction: L-threonine is first activated by ATP to form Thr-AMP and then transferred to the acceptor end of tRNA(Thr). Also edits incorrectly charged L-seryl-tRNA(Thr). This Mycoplasmoides gallisepticum (strain R(low / passage 15 / clone 2)) (Mycoplasma gallisepticum) protein is Threonine--tRNA ligase.